The chain runs to 345 residues: Phosphoribosylformylglycinamidine cyclo-ligase (345 aa).

This sequence belongs to the AIR synthase family.

The protein localises to the cytoplasm. The enzyme catalyses 2-formamido-N(1)-(5-O-phospho-beta-D-ribosyl)acetamidine + ATP = 5-amino-1-(5-phospho-beta-D-ribosyl)imidazole + ADP + phosphate + H(+). The protein operates within purine metabolism; IMP biosynthesis via de novo pathway; 5-amino-1-(5-phospho-D-ribosyl)imidazole from N(2)-formyl-N(1)-(5-phospho-D-ribosyl)glycinamide: step 2/2. This is Phosphoribosylformylglycinamidine cyclo-ligase from Shewanella sp. (strain MR-7).